Consider the following 224-residue polypeptide: C-&gt;U-editing enzyme APOBEC-2 (224 aa).

Positions 1–23 (MAQKEEAAEAAAPASQNGDDLEN) are disordered. Zn(2+)-binding residues include E60 and H98. A CMP/dCMP-type deaminase domain is found at 64 to 169 (GRNKTFLCYV…PEVQAALKKL (106 aa)). E100 acts as the Proton donor in catalysis. The Zn(2+) site is built by C128 and C131.

Belongs to the cytidine and deoxycytidylate deaminase family. In terms of assembly, homotetramer. Requires Zn(2+) as cofactor. Expressed exclusively in heart and skeletal muscle.

The catalysed reaction is cytidine(6666) in apoB mRNA + H2O + H(+) = uridine(6666) in apoB mRNA + NH4(+). In terms of biological role, probable C to U editing enzyme whose physiological substrate is not yet known. Does not display detectable apoB mRNA editing. Has a low intrinsic cytidine deaminase activity. May play a role in the epigenetic regulation of gene expression through the process of active DNA demethylation. The sequence is that of C-&gt;U-editing enzyme APOBEC-2 (Apobec2) from Mus musculus (Mouse).